We begin with the raw amino-acid sequence, 391 residues long: Pectate lyase B (391 aa).

The first 30 residues, 1-30, serve as a signal peptide directing secretion; sequence MKKTVRSLCSTALALTLGFTLLSGPASVQA. Ca(2+) is bound by residues Asp181, Asp203, and Asp207. The active site involves Arg305.

Belongs to the polysaccharide lyase 1 family. Ca(2+) serves as cofactor.

The protein localises to the secreted. It catalyses the reaction Eliminative cleavage of (1-&gt;4)-alpha-D-galacturonan to give oligosaccharides with 4-deoxy-alpha-D-galact-4-enuronosyl groups at their non-reducing ends.. It carries out the reaction Eliminative cleavage of (1-&gt;4)-alpha-D-galacturonan methyl ester to give oligosaccharides with 4-deoxy-6-O-methyl-alpha-D-galact-4-enuronosyl groups at their non-reducing ends.. The protein operates within glycan metabolism; pectin degradation. Its function is as follows. Catalyzes the depolymerization of both polygalacturonate and pectins of various methyl esterification degree, with an endo mode of action. Shows the highest activity on 20 to 34% methylated pectin but retains 67%, 51%, 25%, and 1% of its maximum activity on polygalacturonate and 8.5%, 55 to 70%, and 90% methylated pectin, respectively. The protein is Pectate lyase B of Paenibacillus amylolyticus.